The following is a 301-amino-acid chain: tRNA dimethylallyltransferase 1 (301 aa).

10 to 17 (GPTASGKT) contributes to the ATP binding site. Residue 12–17 (TASGKT) participates in substrate binding. Residues 35 to 38 (DSRQ) are interaction with substrate tRNA.

Belongs to the IPP transferase family. Monomer. The cofactor is Mg(2+).

The catalysed reaction is adenosine(37) in tRNA + dimethylallyl diphosphate = N(6)-dimethylallyladenosine(37) in tRNA + diphosphate. Functionally, catalyzes the transfer of a dimethylallyl group onto the adenine at position 37 in tRNAs that read codons beginning with uridine, leading to the formation of N6-(dimethylallyl)adenosine (i(6)A). The protein is tRNA dimethylallyltransferase 1 of Geotalea uraniireducens (strain Rf4) (Geobacter uraniireducens).